Here is a 408-residue protein sequence, read N- to C-terminus: Secreted mono- and diacylglycerol lipase 2 (408 aa).

The signal sequence occupies residues 1–24; it reads MRFKLADSLSLITVQLILATSTLA. N-linked (GlcNAc...) asparagine glycosylation occurs at N177. S217 functions as the Nucleophile in the catalytic mechanism. Catalysis depends on residues D283 and H374.

This sequence belongs to the AB hydrolase superfamily. Lipase family. Class 3 subfamily.

The protein localises to the secreted. It catalyses the reaction a monoacylglycerol + H2O = glycerol + a fatty acid + H(+). The catalysed reaction is a diacylglycerol + H2O = a monoacylglycerol + a fatty acid + H(+). Secreted mono- and diacylglycerol lipase involved in plant virulence. Has a substrate preference for p-nitrophenyl esters with a carbon chain length of C10 (p-nitrophenyl caprate). This Gibberella zeae (strain ATCC MYA-4620 / CBS 123657 / FGSC 9075 / NRRL 31084 / PH-1) (Wheat head blight fungus) protein is Secreted mono- and diacylglycerol lipase 2.